A 450-amino-acid polypeptide reads, in one-letter code: Probable ECA polymerase (450 aa).

11 consecutive transmembrane segments (helical) span residues 6-26 (FSGL…LTWF), 37-57 (VFFS…TSVL), 63-83 (VGVA…CFYA), 118-138 (VILM…NGFL), 155-175 (GVAL…VYFL), 181-201 (AWLF…MIVG), 207-227 (IIIA…ISLW), 228-248 (MLAA…LKRY), 341-361 (LVVM…GLII), 378-398 (YKAA…IVLA), and 410-430 (VFFI…YWLF).

The protein belongs to the WzyE family. Probably part of a complex composed of WzxE, WzyE and WzzE.

Its subcellular location is the cell inner membrane. It functions in the pathway bacterial outer membrane biogenesis; enterobacterial common antigen biosynthesis. In terms of biological role, probably involved in the polymerization of enterobacterial common antigen (ECA) trisaccharide repeat units. The sequence is that of Probable ECA polymerase from Escherichia fergusonii (strain ATCC 35469 / DSM 13698 / CCUG 18766 / IAM 14443 / JCM 21226 / LMG 7866 / NBRC 102419 / NCTC 12128 / CDC 0568-73).